Here is a 346-residue protein sequence, read N- to C-terminus: Biotin synthase (346 aa).

In terms of domain architecture, Radical SAM core spans 38 to 256 (RQVQVSTLLS…IAVARIMMPT (219 aa)). 3 residues coordinate [4Fe-4S] cluster: Cys-53, Cys-57, and Cys-60. The [2Fe-2S] cluster site is built by Cys-97, Cys-128, Cys-188, and Arg-260.

This sequence belongs to the radical SAM superfamily. Biotin synthase family. Homodimer. It depends on [4Fe-4S] cluster as a cofactor. [2Fe-2S] cluster serves as cofactor.

The catalysed reaction is (4R,5S)-dethiobiotin + (sulfur carrier)-SH + 2 reduced [2Fe-2S]-[ferredoxin] + 2 S-adenosyl-L-methionine = (sulfur carrier)-H + biotin + 2 5'-deoxyadenosine + 2 L-methionine + 2 oxidized [2Fe-2S]-[ferredoxin]. It participates in cofactor biosynthesis; biotin biosynthesis; biotin from 7,8-diaminononanoate: step 2/2. Catalyzes the conversion of dethiobiotin (DTB) to biotin by the insertion of a sulfur atom into dethiobiotin via a radical-based mechanism. The chain is Biotin synthase from Escherichia coli (strain K12 / DH10B).